A 136-amino-acid polypeptide reads, in one-letter code: ATP synthase epsilon chain (136 aa).

This sequence belongs to the ATPase epsilon chain family. In terms of assembly, F-type ATPases have 2 components, CF(1) - the catalytic core - and CF(0) - the membrane proton channel. CF(1) has five subunits: alpha(3), beta(3), gamma(1), delta(1), epsilon(1). CF(0) has three main subunits: a, b and c.

Its subcellular location is the cell membrane. Produces ATP from ADP in the presence of a proton gradient across the membrane. The protein is ATP synthase epsilon chain of Ureaplasma parvum serovar 3 (strain ATCC 27815 / 27 / NCTC 11736).